The following is a 210-amino-acid chain: Proteasome subunit beta (210 aa).

Positions 1-9 (MDNDKHLKG) are cleaved as a propeptide — removed in mature form; by autocatalysis. Threonine 10 functions as the Nucleophile in the catalytic mechanism.

It belongs to the peptidase T1B family. As to quaternary structure, the 20S proteasome core is composed of 14 alpha and 14 beta subunits that assemble into four stacked heptameric rings, resulting in a barrel-shaped structure. The two inner rings, each composed of seven catalytic beta subunits, are sandwiched by two outer rings, each composed of seven alpha subunits. The catalytic chamber with the active sites is on the inside of the barrel. Has a gated structure, the ends of the cylinder being occluded by the N-termini of the alpha-subunits. Is capped at one or both ends by the proteasome regulatory ATPase, PAN.

Its subcellular location is the cytoplasm. The catalysed reaction is Cleavage of peptide bonds with very broad specificity.. With respect to regulation, the formation of the proteasomal ATPase PAN-20S proteasome complex, via the docking of the C-termini of PAN into the intersubunit pockets in the alpha-rings, triggers opening of the gate for substrate entry. Interconversion between the open-gate and close-gate conformations leads to a dynamic regulation of the 20S proteasome proteolysis activity. Its function is as follows. Component of the proteasome core, a large protease complex with broad specificity involved in protein degradation. The sequence is that of Proteasome subunit beta from Methanococcoides burtonii (strain DSM 6242 / NBRC 107633 / OCM 468 / ACE-M).